A 112-amino-acid polypeptide reads, in one-letter code: Reprimo-like protein (112 aa).

A helical transmembrane segment spans residues 59–79; sequence VVQIAVLCVLSLTVLFGIFFL.

This sequence belongs to the reprimo family.

The protein resides in the membrane. This Xenopus laevis (African clawed frog) protein is Reprimo-like protein (rprml).